The sequence spans 24 residues: Chlorate reductase subunit beta (24 aa).

Heterotrimer of alpha, beta and gamma subunits. Requires [3Fe-4S] cluster as cofactor. [4Fe-4S] cluster is required as a cofactor.

The protein localises to the cytoplasm. Electron transfer subunit of the chlorate reductase. This Stutzerimonas chloritidismutans (Pseudomonas chloritidismutans) protein is Chlorate reductase subunit beta.